The chain runs to 124 residues: Holo-[acyl-carrier-protein] synthase (124 aa).

Positions 7 and 55 each coordinate Mg(2+).

The protein belongs to the P-Pant transferase superfamily. AcpS family. Mg(2+) serves as cofactor.

It is found in the cytoplasm. The catalysed reaction is apo-[ACP] + CoA = holo-[ACP] + adenosine 3',5'-bisphosphate + H(+). Transfers the 4'-phosphopantetheine moiety from coenzyme A to a Ser of acyl-carrier-protein. The polypeptide is Holo-[acyl-carrier-protein] synthase (Borreliella afzelii (strain PKo) (Borrelia afzelii)).